We begin with the raw amino-acid sequence, 102 residues long: GDAERGKKLFESRAGQCHSSQKGVNSTGPALYGVYGRTSGTVPGYAYSNANKNAAIVWEDESLNKFLENPKKYVPGTKMAFAGIKAKKDRLDIIAYMKTLKD.

G1 bears the N-acetylglycine mark. The span at 1–11 shows a compositional bias: basic and acidic residues; the sequence is GDAERGKKLFE. The tract at residues 1–26 is disordered; the sequence is GDAERGKKLFESRAGQCHSSQKGVNS. Positions 17, 18, and 79 each coordinate heme c. Positions 17–26 are enriched in polar residues; sequence CHSSQKGVNS. K85 is modified (N6,N6,N6-trimethyllysine).

Belongs to the cytochrome c family. Post-translationally, binds 1 heme c group covalently per subunit.

The protein resides in the mitochondrion intermembrane space. Functionally, electron carrier protein. The oxidized form of the cytochrome c heme group can accept an electron from the heme group of the cytochrome c1 subunit of cytochrome reductase. Cytochrome c then transfers this electron to the cytochrome oxidase complex, the final protein carrier in the mitochondrial electron-transport chain. In Euglena viridis (Cercaria viridis), this protein is Cytochrome c.